The following is a 254-amino-acid chain: Phosphatidylglycerol--prolipoprotein diacylglyceryl transferase (254 aa).

3 helical membrane passes run 11 to 31 (LAIR…LLLA), 49 to 69 (FLIA…IFEF), and 84 to 104 (QGGL…YIYL). Arg-130 serves as a coordination point for a 1,2-diacyl-sn-glycero-3-phospho-(1'-sn-glycerol). 3 helical membrane passes run 169–189 (PTFL…VYLL), 196–216 (GIVF…IEGL), and 228–248 (VAQL…YNII).

The protein belongs to the Lgt family.

Its subcellular location is the cell membrane. It carries out the reaction L-cysteinyl-[prolipoprotein] + a 1,2-diacyl-sn-glycero-3-phospho-(1'-sn-glycerol) = an S-1,2-diacyl-sn-glyceryl-L-cysteinyl-[prolipoprotein] + sn-glycerol 1-phosphate + H(+). It functions in the pathway protein modification; lipoprotein biosynthesis (diacylglyceryl transfer). Catalyzes the transfer of the diacylglyceryl group from phosphatidylglycerol to the sulfhydryl group of the N-terminal cysteine of a prolipoprotein, the first step in the formation of mature lipoproteins. In Clostridium botulinum (strain Loch Maree / Type A3), this protein is Phosphatidylglycerol--prolipoprotein diacylglyceryl transferase.